We begin with the raw amino-acid sequence, 78 residues long: U5-ctenitoxin-Pk1a (78 aa).

7 cysteine pairs are disulfide-bonded: cysteine 6–cysteine 23, cysteine 13–cysteine 29, cysteine 20–cysteine 52, cysteine 22–cysteine 40, cysteine 31–cysteine 38, cysteine 58–cysteine 73, and cysteine 69–cysteine 77.

As to expression, expressed by the venom gland.

The protein resides in the secreted. Its function is as follows. Lethal neurotoxin. Causes spastic paralysis and death in mice in 4-6 minutes after intracerebroventricular injection at dose levels of 1.5 ug per mouse. This Phoneutria keyserlingi (Brazilian wandering spider) protein is U5-ctenitoxin-Pk1a.